A 207-amino-acid chain; its full sequence is MSTAQPAGADAVRDDLRVLFVDNFDSFTYNLVEYVSEHAETEVVRNTASLDDVEAFDPDAIILSPGPGHPKNERDVGVTLDVLREVSPDVPTLGVCLGLESAVYAYGGTIGRAPEPIHGKAFPIDHDGKGVFAGLEQGFQGGRYHSLIADDVPEEFVVSATTETEDGTELVMGVRHREHPIEAVQFHPESVLTAVGHDVIRNFLAGL.

One can recognise a Glutamine amidotransferase type-1 domain in the interval 17-207 (RVLFVDNFDS…DVIRNFLAGL (191 aa)). 66–68 (GPG) lines the L-glutamine pocket. C96 acts as the Nucleophile; for GATase activity in catalysis. Position 146–147 (146–147 (SL)) interacts with L-glutamine. Residues H187 and E189 contribute to the active site.

Tetramer of two components I and two components II.

It carries out the reaction chorismate + L-glutamine = anthranilate + pyruvate + L-glutamate + H(+). It participates in amino-acid biosynthesis; L-tryptophan biosynthesis; L-tryptophan from chorismate: step 1/5. This Haloarcula marismortui (strain ATCC 43049 / DSM 3752 / JCM 8966 / VKM B-1809) (Halobacterium marismortui) protein is Anthranilate synthase component II (trpG1).